Here is a 420-residue protein sequence, read N- to C-terminus: Pyridinium-3,5-bisthiocarboxylic acid mononucleotide nickel insertion protein (420 aa).

A disordered region spans residues 81–104 (NHEHKHNHHEIKNDEPAHSHEHHH). Over residues 90 to 99 (EIKNDEPAHS) the composition is skewed to basic and acidic residues.

The protein belongs to the LarC family.

The enzyme catalyses Ni(II)-pyridinium-3,5-bisthiocarboxylate mononucleotide = pyridinium-3,5-bisthiocarboxylate mononucleotide + Ni(2+). Involved in the biosynthesis of a nickel-pincer cofactor ((SCS)Ni(II) pincer complex). Binds Ni(2+), and functions in nickel delivery to pyridinium-3,5-bisthiocarboxylic acid mononucleotide (P2TMN), to form the mature cofactor. Is thus probably required for the activation of nickel-pincer cofactor-dependent enzymes. This is Pyridinium-3,5-bisthiocarboxylic acid mononucleotide nickel insertion protein from Clostridium acetobutylicum (strain ATCC 824 / DSM 792 / JCM 1419 / IAM 19013 / LMG 5710 / NBRC 13948 / NRRL B-527 / VKM B-1787 / 2291 / W).